An 835-amino-acid polypeptide reads, in one-letter code: Invasin (835 aa).

Residues 451 to 541 (VITSEVTDDG…QQATVDVRFA (91 aa)) enclose the Big-1 domain.

Belongs to the intimin/invasin family.

It is found in the cell outer membrane. Its function is as follows. Invasin is a protein that allows enteric bacteria to penetrate cultured mammalian cells. The entry of invasin in the cell is mediated by binding several beta-1 chain integrins. This Yersinia enterocolitica protein is Invasin.